A 463-amino-acid polypeptide reads, in one-letter code: tRNA-2-methylthio-N(6)-dimethylallyladenosine synthase (463 aa).

The 119-residue stretch at 18–136 (RKLYIETYGC…LPNLVGAAEQ (119 aa)) folds into the MTTase N-terminal domain. [4Fe-4S] cluster is bound by residues cysteine 27, cysteine 63, cysteine 100, cysteine 174, cysteine 178, and cysteine 181. One can recognise a Radical SAM core domain in the interval 160–392 (GGVHINGFVS…IALQNRLSEE (233 aa)). The region spanning 395-458 (KRDIGKTFEV…SATLFGEVVE (64 aa)) is the TRAM domain.

The protein belongs to the methylthiotransferase family. MiaB subfamily. In terms of assembly, monomer. [4Fe-4S] cluster is required as a cofactor.

The protein localises to the cytoplasm. The enzyme catalyses N(6)-dimethylallyladenosine(37) in tRNA + (sulfur carrier)-SH + AH2 + 2 S-adenosyl-L-methionine = 2-methylsulfanyl-N(6)-dimethylallyladenosine(37) in tRNA + (sulfur carrier)-H + 5'-deoxyadenosine + L-methionine + A + S-adenosyl-L-homocysteine + 2 H(+). In terms of biological role, catalyzes the methylthiolation of N6-(dimethylallyl)adenosine (i(6)A), leading to the formation of 2-methylthio-N6-(dimethylallyl)adenosine (ms(2)i(6)A) at position 37 in tRNAs that read codons beginning with uridine. The polypeptide is tRNA-2-methylthio-N(6)-dimethylallyladenosine synthase (Porphyromonas gingivalis (strain ATCC BAA-308 / W83)).